Reading from the N-terminus, the 136-residue chain is MKRYILATVIASLVAAPAMALAAGNNILSVHILDQQTGKPAPGVEVVLEQKKDNGWTQLNTGHTDQDGRIKALWPEKAAAPGDYRVIFKTGQYFESKKLDTFFPEIPVEFHISKTNEHYHVPLLLSQYGYSTYRGS.

Positions 1 to 20 are cleaved as a signal peptide; it reads MKRYILATVIASLVAAPAMA. 3 residues coordinate substrate: His31, Arg69, and Tyr133.

This sequence belongs to the transthyretin family. 5-hydroxyisourate hydrolase subfamily. In terms of assembly, homotetramer.

The protein localises to the periplasm. The catalysed reaction is 5-hydroxyisourate + H2O = 5-hydroxy-2-oxo-4-ureido-2,5-dihydro-1H-imidazole-5-carboxylate + H(+). In terms of biological role, catalyzes the hydrolysis of 5-hydroxyisourate (HIU) to 2-oxo-4-hydroxy-4-carboxy-5-ureidoimidazoline (OHCU). The chain is 5-hydroxyisourate hydrolase (hiuH) from Salmonella typhimurium (strain LT2 / SGSC1412 / ATCC 700720).